Here is a 334-residue protein sequence, read N- to C-terminus: Formamidase (334 aa).

A CN hydrolase domain is found at 14-260 (FLVAAIQFPV…WEIVTGEIYP (247 aa)). The active-site Proton acceptor is E60. Residue K133 is the Proton donor of the active site. The active-site Nucleophile is the C166.

This sequence belongs to the carbon-nitrogen hydrolase superfamily. Aliphatic amidase family.

The enzyme catalyses formamide + H2O = formate + NH4(+). In terms of biological role, is an aliphatic amidase with a restricted substrate specificity, as it only hydrolyzes formamide. The chain is Formamidase from Helicobacter pylori (strain G27).